The sequence spans 260 residues: DNA repair protein RecO (260 aa).

The protein belongs to the RecO family.

Involved in DNA repair and RecF pathway recombination. This chain is DNA repair protein RecO, found in Paracidovorax citrulli (strain AAC00-1) (Acidovorax citrulli).